Consider the following 211-residue polypeptide: Large ribosomal subunit protein uL3 (211 aa).

Belongs to the universal ribosomal protein uL3 family. In terms of assembly, part of the 50S ribosomal subunit. Forms a cluster with proteins L14 and L19.

Functionally, one of the primary rRNA binding proteins, it binds directly near the 3'-end of the 23S rRNA, where it nucleates assembly of the 50S subunit. The polypeptide is Large ribosomal subunit protein uL3 (Trichlorobacter lovleyi (strain ATCC BAA-1151 / DSM 17278 / SZ) (Geobacter lovleyi)).